The following is a 475-amino-acid chain: Poly(3-hydroxyalkanoate) polymerase subunit PhaC (475 aa).

The AB hydrolase-1 domain maps to 82 to 348; it reads PILIVYALIN…TIEFSTGHIG (267 aa). Active-site charge relay system residues include Cys-162, Asp-317, and His-346. Positions 369 to 431 are disordered; it reads ERSTGSEEVD…ADVDSVSGIG (63 aa). Residues 375–423 show a composition bias toward acidic residues; the sequence is EEVDIEVESPEAAEDDAVDQSELTDIDVDATDDVDADATEDDATDEPAD.

Belongs to the PHA/PHB synthase family. Heterodimer with PhaE.

Its pathway is biopolymer metabolism; poly-(R)-3-hydroxybutanoate biosynthesis. Its function is as follows. Involved in the production of polyhydroxyalkonic acids (PHAs), which are water-insoluble biopolymers used as intracellular energy reserve material when cells grow under conditions of nutrient limitation. PHAs are composed primarily of 3-hydroxybutyric acid (3HB) and 3-hydroxyvaleric acid (3HV). Required for the production of poly-beta-hydroxybutyrate (PHB) and poly(beta-hydroxybutyrate-co-beta-hydroxyvalerate) (PHBV). This chain is Poly(3-hydroxyalkanoate) polymerase subunit PhaC (phaC), found in Haloarcula marismortui (strain ATCC 43049 / DSM 3752 / JCM 8966 / VKM B-1809) (Halobacterium marismortui).